A 549-amino-acid chain; its full sequence is Eukaryotic translation initiation factor 3 subunit D-2 (549 aa).

The disordered stretch occupies residues 107 to 157 (ARVKGRSGRGPGMLGVAGSMAGGGTTSGSTKYGKGRESRRNQGRRFARNAP). A compositionally biased stretch (gly residues) spans 114–132 (GRGPGMLGVAGSMAGGGTT). The tract at residues 288 to 302 (QFDLLTVNETSLEPP) is RNA gate. The disordered stretch occupies residues 527–549 (NSFDSDAEDEENSSEPFANSLDN). Over residues 529–539 (FDSDAEDEENS) the composition is skewed to acidic residues.

Belongs to the eIF-3 subunit D family. As to quaternary structure, component of the eukaryotic translation initiation factor 3 (eIF-3) complex. The eIF-3 complex interacts with pix.

Its subcellular location is the cytoplasm. Functionally, mRNA cap-binding component of the eukaryotic translation initiation factor 3 (eIF-3) complex, which is involved in protein synthesis of a specialized repertoire of mRNAs and, together with other initiation factors, stimulates binding of mRNA and methionyl-tRNAi to the 40S ribosome. The eIF-3 complex specifically targets and initiates translation of a subset of mRNAs involved in cell proliferation. In the eIF-3 complex, eif3d specifically recognizes and binds the 7-methylguanosine cap of a subset of mRNAs. The sequence is that of Eukaryotic translation initiation factor 3 subunit D-2 from Drosophila ananassae (Fruit fly).